A 268-amino-acid chain; its full sequence is Shikimate dehydrogenase (NADP(+)) (268 aa).

Shikimate-binding positions include 13–15 (SLS) and threonine 60. The active-site Proton acceptor is the lysine 64. Glutamate 76 is an NADP(+) binding site. Positions 85 and 100 each coordinate shikimate. NADP(+) is bound by residues 124-128 (GAGGA), 148-153 (NRTMAR), and isoleucine 209. Residue tyrosine 211 participates in shikimate binding. An NADP(+)-binding site is contributed by glycine 232.

Belongs to the shikimate dehydrogenase family. As to quaternary structure, homodimer.

The catalysed reaction is shikimate + NADP(+) = 3-dehydroshikimate + NADPH + H(+). It functions in the pathway metabolic intermediate biosynthesis; chorismate biosynthesis; chorismate from D-erythrose 4-phosphate and phosphoenolpyruvate: step 4/7. Involved in the biosynthesis of the chorismate, which leads to the biosynthesis of aromatic amino acids. Catalyzes the reversible NADPH linked reduction of 3-dehydroshikimate (DHSA) to yield shikimate (SA). The sequence is that of Shikimate dehydrogenase (NADP(+)) from Staphylococcus aureus (strain bovine RF122 / ET3-1).